A 2028-amino-acid chain; its full sequence is Phosphatidylinositol 4-kinase alpha 1 (2028 aa).

Residues 184-241 form a disordered region; that stretch reads PASPKEQRQQNSANSETDTSSSQGSPISTNRYPSGKTEMASPGDEVASHGSNLSSKSS. A compositionally biased stretch (polar residues) spans 192-215; that stretch reads QQNSANSETDTSSSQGSPISTNRY. Residues 231-241 show a composition bias toward low complexity; it reads SHGSNLSSKSS. The PIK helical domain occupies 1483-1659; it reads TEYAKTAFSV…NAAFQEILPQ (177 aa). The interval 1660 to 1773 is pleckstrin homology (PH) domain conferring phosphoinositide binding specificity; the sequence is VRQHIIDGFS…VKPQACIFKV (114 aa). A PI3K/PI4K catalytic domain is found at 1734 to 2012; that stretch reads VDSGIPLQSA…VCTDAYNKWT (279 aa). The G-loop stretch occupies residues 1740–1746; it reads LQSAAKV. Residues 1876–1884 are catalytic loop; that stretch reads QPKDRHNGN. Positions 1895 to 1920 are activation loop; that stretch reads HIDFGFILETSPGGNMRFESAHFKLS.

It belongs to the PI3/PI4-kinase family. Type III PI4K subfamily. As to quaternary structure, interacts in vitro with actin filaments via its PH domain. In terms of tissue distribution, present in leaves and inflorescences.

The protein localises to the membrane. It is found in the cytoplasm. It localises to the perinuclear region. It catalyses the reaction a 1,2-diacyl-sn-glycero-3-phospho-(1D-myo-inositol) + ATP = a 1,2-diacyl-sn-glycero-3-phospho-(1D-myo-inositol 4-phosphate) + ADP + H(+). Repressed by PtdIns4P, adenosine and wortmannin, but stimulated by other negatively charged lipids such as PtdIns3P, PtdOH, and phosphatidyl-serine (PtdSer). In terms of biological role, acts on phosphatidylinositol (PtdIns) in the first committed step in the production of the second messenger inositol-1,4,5,-trisphosphate. Can bind to phosphatidylinositol 4-monophosphate (PI-4-P or PtdIns4P), phosphatidylinositol 4,5-bisphosphate (PI-4,5-P2 or PtdIns4,5P2), and phosphatidic acid (PtdOH), but not to 3-phosphoinositides. May function upstream of the cold response phosphoinositide-dependent phospholipase C (PI-PLC) pathway. The sequence is that of Phosphatidylinositol 4-kinase alpha 1 from Arabidopsis thaliana (Mouse-ear cress).